The following is a 109-amino-acid chain: UPF0060 membrane protein PCC8801_1733 (109 aa).

A run of 4 helical transmembrane segments spans residues 7–27, 36–56, 58–78, and 87–107; these read LLYF…VWLW, YALL…LQTA, FGRV…LWGW, and SYDW…MYAP.

Belongs to the UPF0060 family.

Its subcellular location is the cell inner membrane. The sequence is that of UPF0060 membrane protein PCC8801_1733 from Rippkaea orientalis (strain PCC 8801 / RF-1) (Cyanothece sp. (strain PCC 8801)).